The sequence spans 185 residues: Large ribosomal subunit protein uL5 (185 aa).

The protein belongs to the universal ribosomal protein uL5 family. In terms of assembly, part of the 50S ribosomal subunit; part of the 5S rRNA/L5/L18/L25 subcomplex. Contacts the 5S rRNA and the P site tRNA. Forms a bridge to the 30S subunit in the 70S ribosome.

Its function is as follows. This is one of the proteins that bind and probably mediate the attachment of the 5S RNA into the large ribosomal subunit, where it forms part of the central protuberance. In the 70S ribosome it contacts protein S13 of the 30S subunit (bridge B1b), connecting the 2 subunits; this bridge is implicated in subunit movement. Contacts the P site tRNA; the 5S rRNA and some of its associated proteins might help stabilize positioning of ribosome-bound tRNAs. This is Large ribosomal subunit protein uL5 from Bacteroides thetaiotaomicron (strain ATCC 29148 / DSM 2079 / JCM 5827 / CCUG 10774 / NCTC 10582 / VPI-5482 / E50).